A 144-amino-acid polypeptide reads, in one-letter code: Aspartate carbamoyltransferase regulatory chain (144 aa).

Residues cysteine 103, cysteine 108, cysteine 132, and cysteine 135 each contribute to the Zn(2+) site.

Belongs to the PyrI family. As to quaternary structure, contains catalytic and regulatory chains. Zn(2+) serves as cofactor.

Involved in allosteric regulation of aspartate carbamoyltransferase. This Clostridium tetani (strain Massachusetts / E88) protein is Aspartate carbamoyltransferase regulatory chain.